We begin with the raw amino-acid sequence, 105 residues long: Protein yippee-like At4g27740 (105 aa).

The 98-residue stretch at 8–105 folds into the Yippee domain; it reads PTYFCRNCEN…IEKLKLTKRY (98 aa). Zn(2+)-binding residues include cysteine 12, cysteine 15, cysteine 68, and cysteine 71.

It belongs to the yippee family.

This chain is Protein yippee-like At4g27740, found in Arabidopsis thaliana (Mouse-ear cress).